We begin with the raw amino-acid sequence, 389 residues long: Na(+)/H(+) antiporter NhaA (389 aa).

The next 11 helical transmembrane spans lie at 14 to 34 (AGGI…NSPL), 59 to 79 (LILW…GLEV), 95 to 115 (SLPT…YLLF), 124 to 144 (AGWA…MALL), 154 to 174 (VFLL…IALF), 177 to 197 (TDLS…LVGL), 213 to 233 (LILW…GVII), 257 to 277 (PWST…VYVG), 292 to 312 (IALG…YIAV), 328 to 348 (IAPV…IASL), and 363 to 383 (LGTL…LSKV).

The protein belongs to the NhaA Na(+)/H(+) (TC 2.A.33) antiporter family.

Its subcellular location is the cell inner membrane. The enzyme catalyses Na(+)(in) + 2 H(+)(out) = Na(+)(out) + 2 H(+)(in). Its function is as follows. Na(+)/H(+) antiporter that extrudes sodium in exchange for external protons. The polypeptide is Na(+)/H(+) antiporter NhaA (Shewanella baltica (strain OS223)).